Consider the following 148-residue polypeptide: Lysozyme C-1 (148 aa).

The first 18 residues, Met-1–Ala-18, serve as a signal peptide directing secretion. The C-type lysozyme domain maps to Lys-19–Val-148. Intrachain disulfides connect Cys-24/Cys-146, Cys-48/Cys-134, Cys-83/Cys-99, and Cys-95/Cys-113. Residues Glu-53 and Asp-71 contribute to the active site.

This sequence belongs to the glycosyl hydrolase 22 family. In terms of assembly, monomer. Expressed in lung, small intestine and spleen.

It is found in the secreted. The catalysed reaction is Hydrolysis of (1-&gt;4)-beta-linkages between N-acetylmuramic acid and N-acetyl-D-glucosamine residues in a peptidoglycan and between N-acetyl-D-glucosamine residues in chitodextrins.. In terms of biological role, lysozymes have primarily a bacteriolytic function; those in tissues and body fluids are associated with the monocyte-macrophage system and enhance the activity of immunoagents. In the intestine they may also have a digestive function. This chain is Lysozyme C-1 (Lyz1), found in Rattus norvegicus (Rat).